The chain runs to 49 residues: Agglutinin-1 (49 aa).

Homooligomer. Glycosylated.

Its function is as follows. Beta-galactoside specific lectin. Has a hemagglutinating activity on erythrocytes. The polypeptide is Agglutinin-1 (Pomacea flagellata (Apple snail)).